The following is a 627-amino-acid chain: MEEADRILIHSLRQAGTAVPPDVQTLRAFTTELVVEAVVRCLRVINPAVGSGLSPLLPLAMSARFRLAMSLAQACMDLGYPLELGYQNFLYPSEPDLRDLLLFLAERLPTDASEDADQPAGDSAILLRAIGSQIRDQLALPWVPPHLRTPKLQHLQGSALQKPFHASRLVVPELSSRGEPREFQASPLLLPVPTQVPQPVGRVASLLEHHALQLCQQTGRDRPGDEDWVHRTSRLPPQEDTRAQRQRLQKQLTEHLRQSWGLLGAPIQARDLGELLQAWGAGAKTGAPKGSRFTHSEKFTFHLEPQAQATQVSDVPATSRRPEQVTWAAQEQELESLREQLEGVNRSIEEVEADMKTLGVSFVQAESECRHSKLSTAEREQALRLKSRAVELLPDGTANLAKLQLVVENSAQRVIHLAGQWEKHRVPLLAEYRHLRKLQDCRELESSRRLAEIQELHQSVRAAAEEARRKEEVYKQLMSELETLPRDVSRLAYTQRILEIVGNIRKQKEEITKILSDTKELQKEINSLSGKLDRTFAVTDELVFKDAKKDDAVRKAYKYLAALHENCSQLIQTIEDTGTIMREVRDLEEQIETELGKKTLSNLEKIREDYRALRQENAGLLGRVREA.

The interval 1-321 is sufficient for interaction with COMMD1; sequence MEEADRILIH…VSDVPATSRR (321 aa). The sufficicient and required for interaction with CCDC93 stretch occupies residues 1–447; the sequence is MEEADRILIH…LQDCRELESS (447 aa). The interval 218–243 is disordered; sequence TGRDRPGDEDWVHRTSRLPPQEDTRA. A compositionally biased stretch (basic and acidic residues) spans 219–230; sequence GRDRPGDEDWVH. Positions 320-627 form a coiled coil; that stretch reads RRPEQVTWAA…AGLLGRVREA (308 aa). A Phosphoserine modification is found at S410.

This sequence belongs to the CCDC22 family. In terms of assembly, component of the commander complex consisting of the CCC subcomplex and the retriever subcomplex. Component of the CCC (COMMD/CCDC22/CCDC93) subcomplex consisting of COMMD1, COMMD2, COMMD3, COMMD4, COMMD5, COMMD6, COMMD7, COMMD8, COMMD9, COMMD10, CCDC22 and CCDC93. Forms a coiled-coil heterodimer with CCDC22; this heterodimer interacts with the guanine nucleotide exchange factor DENND10; the interaction is direct. Interacts with CUL1, CUL2, CUL3, SKP1, BTRC. Interacts with SNX17 and SNX31. Interacts with CPNE1 and CPNE4. In terms of tissue distribution, widely expressed in adult tissues and in fetal liver and brain, with highest levels in prostate and lowest in skeletal muscle.

It localises to the endosome. Its subcellular location is the cytoplasm. The protein localises to the cytoskeleton. The protein resides in the microtubule organizing center. It is found in the centrosome. Its function is as follows. Component of the commander complex that is essential for endosomal recycling of transmembrane cargos; the Commander complex is composed of composed of the CCC subcomplex and the retriever subcomplex. Component of the CCC complex, which is involved in the regulation of endosomal recycling of surface proteins, including integrins, signaling receptor and channels. Involved in regulation of NF-kappa-B signaling. Promotes ubiquitination of I-kappa-B-kinase subunit IKBKB and its subsequent proteasomal degradation leading to NF-kappa-B activation; the function may involve association with COMMD8 and a CUL1-dependent E3 ubiquitin ligase complex. May down-regulate NF-kappa-B activity via association with COMMD1 and involving a CUL2-dependent E3 ubiquitin ligase complex. Regulates the cellular localization of COMM domain-containing proteins, such as COMMD1 and COMMD10. Component of the CCC complex, which is involved in the regulation of endosomal recycling of surface proteins, including integrins, signaling receptor and channels. The CCC complex associates with SNX17, retriever and WASH complexes to prevent lysosomal degradation and promote cell surface recycling of numerous cargos such as integrins ITGA5:ITGB1. Plays a role in copper ion homeostasis. Involved in copper-dependent ATP7A trafficking between the trans-Golgi network and vesicles in the cell periphery; the function is proposed to depend on its association within the CCC complex and cooperation with the WASH complex on early endosomes. (Microbial infection) The CCC complex, in collaboration with the heterotrimeric retriever complex, mediates the exit of human papillomavirus to the cell surface. The chain is Coiled-coil domain-containing protein 22 (CCDC22) from Homo sapiens (Human).